The primary structure comprises 235 residues: SMN complex subunit yip11/gem2 (235 aa).

The tract at residues 1-34 (MPSKRKRNPLQYQTSGSLDEETNQRSAFPQIDNN) is disordered. A compositionally biased stretch (polar residues) spans 24-34 (QRSAFPQIDNN). Phosphoserine is present on residues Ser117 and Ser118.

The protein belongs to the gemin-2 family. In terms of assembly, part of the core SMN complex at least composed of smn1, yip11/gem2, gem6, gem7 and gem8. Interacts with smn1; the interaction is direct.

The protein localises to the nucleus. Functionally, the SMN complex catalyzes the assembly of small nuclear ribonucleoproteins (snRNPs), the building blocks of the spliceosome, and thereby plays an important role in the splicing of cellular pre-mRNAs. Most spliceosomal snRNPs contain a common set of Sm proteins smb1, smd1, smd2, smd3, sme1, smf1 and smg1 that assemble in a heptameric protein ring on the Sm site of the small nuclear RNA to form the core snRNP. In the cytosol, the Sm proteins smd1, smd2, sme1, smf1 and smg1 (5Sm) are trapped in an inactive 6S pICln-Sm complex by the chaperone saf5. To complete assembly of core snRNPs, the SMN complex accepts 5Sm from saf5. Binding of snRNA inside 5Sm ultimately triggers eviction of the SMN complex, thereby allowing binding of smd3 and smb1 to complete assembly of the core snRNP. Within the SMN complex, yip11/gem2 constrains the conformation of 5Sm, thereby promoting 5Sm binding to snRNA containing the snRNP code (a nonameric Sm site and a 3'-adjacent stem-loop), thus preventing progression of assembly until a cognate substrate is bound. The sequence is that of SMN complex subunit yip11/gem2 (yip11) from Schizosaccharomyces pombe (strain 972 / ATCC 24843) (Fission yeast).